The sequence spans 192 residues: Nucleoside triphosphate pyrophosphatase (192 aa).

Residue D73 is the Proton acceptor of the active site.

The protein belongs to the Maf family. The cofactor is a divalent metal cation.

The protein resides in the cytoplasm. It catalyses the reaction a ribonucleoside 5'-triphosphate + H2O = a ribonucleoside 5'-phosphate + diphosphate + H(+). It carries out the reaction a 2'-deoxyribonucleoside 5'-triphosphate + H2O = a 2'-deoxyribonucleoside 5'-phosphate + diphosphate + H(+). Its function is as follows. Nucleoside triphosphate pyrophosphatase. May have a dual role in cell division arrest and in preventing the incorporation of modified nucleotides into cellular nucleic acids. This Ehrlichia ruminantium (strain Gardel) protein is Nucleoside triphosphate pyrophosphatase.